The sequence spans 664 residues: MAAAAAAPSPSFSKTLSSSSSKSSTLLPRSTFPFPHHPHKTTPPPLHLTPTHIHSQRRRFTISNVISTTQKVSETQKAETFVSRFAPDEPRKGSDVLVEALEREGVTDVFAYPGGASMEIHQALTRSSIIRNVLPRHEQGGVFAAEGYARATGFPGVCIATSGPGATNLVSGLADALLDSVPIVAITGQVPRRMIGTDAFQETPIVEVTRSITKHNYLVMDVEDIPRVVREAFFLARSGRPGPVLIDVPKDIQQQLVIPDWDQPMRLPGYMSRLPKLPNEMLLEQIVRLISESKKPVLYVGGGCSQSSEELRRFVELTGIPVASTLMGLGAFPTGDELSLSMLGMHGTVYANYAVDSSDLLLAFGVRFDDRVTGKLEAFASRAKIVHIDIDSAEIGKNKQPHVSICADIKLALQGLNSILESKEGKLKLDFSAWRQELTVQKVKYPLNFKTFGDAIPPQYAIQVLDELTNGSAIISTGVGQHQMWAAQYYKYRKPRQWLTSGGLGAMGFGLPAAIGAAVGRPDEVVVDIDGDGSFIMNVQELATIKVENLPVKIMLLNNQHLGMVVQWEDRFYKANRAHTYLGNPSNEAEIFPNMLKFAEACGVPAARVTHRDDLRAAIQKMLDTPGPYLLDVIVPHQEHVLPMIPSGGAFKDVITEGDGRSSY.

Over residues 1 to 34 (MAAAAAAPSPSFSKTLSSSSSKSSTLLPRSTFPF) the composition is skewed to low complexity. Residues 1–51 (MAAAAAAPSPSFSKTLSSSSSKSSTLLPRSTFPFPHHPHKTTPPPLHLTPT) are disordered. A chloroplast-targeting transit peptide spans 1 to 91 (MAAAAAAPSP…VSRFAPDEPR (91 aa)). Residue Glu138 participates in thiamine diphosphate binding. Cys158 and Cys304 are joined by a disulfide. Residues Arg240, 346-367 (HGTVYANYAVDSSDLLLAFGVR), and 389-408 (DIDSAEIGKNKQPHVSICAD) each bind FAD. The tract at residues 481 to 561 (QHQMWAAQYY…VKIMLLNNQH (81 aa)) is thiamine pyrophosphate binding. Mg(2+) contacts are provided by Asp532 and Asn559.

Belongs to the TPP enzyme family. Requires Mg(2+) as cofactor. Thiamine diphosphate is required as a cofactor.

The protein resides in the plastid. The protein localises to the chloroplast. The catalysed reaction is 2 pyruvate + H(+) = (2S)-2-acetolactate + CO2. It functions in the pathway amino-acid biosynthesis; L-isoleucine biosynthesis; L-isoleucine from 2-oxobutanoate: step 1/4. It participates in amino-acid biosynthesis; L-valine biosynthesis; L-valine from pyruvate: step 1/4. In Nicotiana tabacum (Common tobacco), this protein is Acetolactate synthase 2, chloroplastic (ALS SURB).